The following is a 340-amino-acid chain: MNKYWTLVLLLSILVVLALTFYFFTPLLDGIVMGVVFAYVAKPVKRKIEHVGRIKASVIATAIVILPISVLMFYGLIQGLNQAIYLITHYKVIESGILNILSKMGIEEGEEYVKWITSNVFSILQSSIQPSAVEITKKATLLILNFFISIVVCFYALADMENFVRRTTSVVPEDRRDEFRRFVEEIDVTFESLWFGNFVVAILIGLVSLPFFLYFNVPFAPLLSGLMFLAALIPIFAEWMIILPVSLYLLLVDVGRGLSFLLIGVVFLYVLPELILRPYFVGYTSKIHPLVLMLAFIGGGLVGGISGFFIAPMIVGLATAIYNYYTKEELATENHDPESV.

7 helical membrane-spanning segments follow: residues 7–27 (LVLL…FTPL), 57–77 (SVIA…YGLI), 140–160 (TLLI…LADM), 193–213 (LWFG…PFFL), 225–245 (GLMF…ILPV), 260–280 (FLLI…RPYF), and 290–310 (LVLM…GFFI).

Belongs to the autoinducer-2 exporter (AI-2E) (TC 2.A.86) family.

The protein resides in the cell membrane. This Archaeoglobus fulgidus (strain ATCC 49558 / DSM 4304 / JCM 9628 / NBRC 100126 / VC-16) protein is Putative transport protein AF_1800.